The chain runs to 313 residues: Small ribosomal subunit protein uS2 (313 aa).

The disordered stretch occupies residues 281 to 301; the sequence is AAPAAPAVEPAPEAAQEATAE.

This sequence belongs to the universal ribosomal protein uS2 family.

In Caulobacter sp. (strain K31), this protein is Small ribosomal subunit protein uS2.